Consider the following 211-residue polypeptide: Guanylate kinase (211 aa).

A Guanylate kinase-like domain is found at 7–185 (GLLIVVTGPS…AVAELRAIIM (179 aa)). 14–21 (GPSAVGKG) is an ATP binding site.

It belongs to the guanylate kinase family.

The protein resides in the cytoplasm. It carries out the reaction GMP + ATP = GDP + ADP. Its function is as follows. Essential for recycling GMP and indirectly, cGMP. The polypeptide is Guanylate kinase (Symbiobacterium thermophilum (strain DSM 24528 / JCM 14929 / IAM 14863 / T)).